Consider the following 142-residue polypeptide: Galectin-10 (142 aa).

S2 is modified (N-acetylserine). One can recognise a Galectin domain in the interval 6 to 138 (VPYTEAASLS…DISLTKFNVS (133 aa)).

Interacts with CEL. Expressed abundantly in the bone marrow. Expressed exclusively by eosinophils and basophils. Not detected in monocytes and neutrophils. Expressed in CD25-positive regulatory T-cells (Treg) (at protein level). Found in intestinal tissue from patients with Celiac disease, expression is directly related to the histological grade of mucosal damage and to the number of eosinophils found in the duodenal lesion (at protein level). Found in sputum of patients with eosinophilic inflammatory diseases such as asthma (at protein level).

The protein localises to the cytoplasm. The protein resides in the cytosol. It localises to the cytoplasmic granule. Regulates immune responses through the recognition of cell-surface glycans. Essential for the anergy and suppressive function of CD25-positive regulatory T-cells (Treg). The sequence is that of Galectin-10 (CLC) from Homo sapiens (Human).